A 759-amino-acid polypeptide reads, in one-letter code: RNA-binding protein 28 (759 aa).

At Ala2 the chain carries N-acetylalanine. Residues 4 to 80 (LTLFVGRLPP…CKINVTVAKK (77 aa)) enclose the RRM 1 domain. Positions 84-105 (NKTKEKGKNENSECPKKEPKAK) are disordered. A compositionally biased stretch (basic and acidic residues) spans 85–101 (KTKEKGKNENSECPKKE). The RRM 2 domain maps to 114–191 (ARLIIRNLSF…RTVAVDWAVA (78 aa)). Phosphoserine is present on Ser122. The interval 201-330 (VSAIGEEKSH…NKKKRKLPSD (130 aa)) is disordered. The span at 205 to 224 (GEEKSHESKHQESVKKKGRE) shows a compositional bias: basic and acidic residues. Acidic residues-rich tracts occupy residues 225–256 (EEDM…EEEN) and 284–313 (SEED…EEQE). RRM domains are found at residues 335-419 (KTVF…LAVT) and 487-597 (TRLC…RSLQ). Ser397 is modified (phosphoserine). Residues 594–759 (RSLQKMRSKP…LAKRSKWFDS (166 aa)) are disordered. Positions 615 to 640 (PAKDQQQKAAQHHTEEQSKVPPEQKR) are enriched in basic and acidic residues. Lys653 is covalently cross-linked (Glycyl lysine isopeptide (Lys-Gly) (interchain with G-Cter in SUMO2)). Residues 689–698 (VKPVHPKKPK) are compositionally biased toward basic residues. Over residues 700 to 715 (QINQWKQEKQQLSSEQ) the composition is skewed to polar residues.

In terms of assembly, interacts with U1, U2, U4, U5, and U6 spliceosomal small nuclear RNAs (snRNAs). Ubiquitously expressed.

The protein resides in the nucleus. It is found in the nucleolus. Functionally, nucleolar component of the spliceosomal ribonucleoprotein complexes. The protein is RNA-binding protein 28 (RBM28) of Homo sapiens (Human).